The chain runs to 239 residues: Transcriptional regulatory protein DcuR (239 aa).

In terms of domain architecture, Response regulatory spans N3 to R121. Position 56 is a 4-aspartylphosphate (D56). A DNA-binding region (H-T-H motif) is located at residues T181–I200.

Post-translationally, phosphorylated and activated by DcuS.

The protein resides in the cytoplasm. Functionally, member of the two-component regulatory system DcuR/DcuS. Involved in the C4-dicarboxylate-stimulated regulation of the genes encoding the anaerobic fumarate respiratory system (frdABCD; nuoAN; dcuB; dcuC; sdhCDAB; etc.). Weakly regulates the aerobic C4-dicarboxylate transporter dctA. This chain is Transcriptional regulatory protein DcuR (dcuR), found in Shigella flexneri.